The primary structure comprises 457 residues: Amidophosphoribosyltransferase (457 aa).

The active-site Nucleophile is cysteine 2. Residues 2 to 223 (CGVVGIYHPD…PGKAAIIKDG (222 aa)) form the Glutamine amidotransferase type-2 domain. Position 239 (cysteine 239) interacts with [4Fe-4S] cluster. Mg(2+) is bound by residues serine 286, aspartate 348, and aspartate 349. Residues cysteine 385, cysteine 438, and cysteine 441 each contribute to the [4Fe-4S] cluster site.

In the C-terminal section; belongs to the purine/pyrimidine phosphoribosyltransferase family. Mg(2+) is required as a cofactor. It depends on [4Fe-4S] cluster as a cofactor.

The enzyme catalyses 5-phospho-beta-D-ribosylamine + L-glutamate + diphosphate = 5-phospho-alpha-D-ribose 1-diphosphate + L-glutamine + H2O. The protein operates within purine metabolism; IMP biosynthesis via de novo pathway; N(1)-(5-phospho-D-ribosyl)glycinamide from 5-phospho-alpha-D-ribose 1-diphosphate: step 1/2. Its function is as follows. Catalyzes the formation of phosphoribosylamine from phosphoribosylpyrophosphate (PRPP) and glutamine. The polypeptide is Amidophosphoribosyltransferase (Archaeoglobus fulgidus (strain ATCC 49558 / DSM 4304 / JCM 9628 / NBRC 100126 / VC-16)).